A 344-amino-acid polypeptide reads, in one-letter code: tRNA dimethylallyltransferase (344 aa).

ATP is bound at residue 19–26 (GPTASGKT). 21–26 (TASGKT) is a substrate binding site.

It belongs to the IPP transferase family. Monomer. It depends on Mg(2+) as a cofactor.

It catalyses the reaction adenosine(37) in tRNA + dimethylallyl diphosphate = N(6)-dimethylallyladenosine(37) in tRNA + diphosphate. In terms of biological role, catalyzes the transfer of a dimethylallyl group onto the adenine at position 37 in tRNAs that read codons beginning with uridine, leading to the formation of N6-(dimethylallyl)adenosine (i(6)A). This chain is tRNA dimethylallyltransferase, found in Bifidobacterium animalis subsp. lactis (strain AD011).